A 528-amino-acid chain; its full sequence is GMP synthase [glutamine-hydrolyzing] (528 aa).

Residues 13 to 204 (AIVILDFGSQ…VYHVCGCDPD (192 aa)) form the Glutamine amidotransferase type-1 domain. C90 (nucleophile) is an active-site residue. Catalysis depends on residues H178 and E180. The region spanning 205-403 (WTTAAFIDEA…LGLPEEIVRR (199 aa)) is the GMPS ATP-PPase domain. Position 232–238 (232–238 (SGGVDSS)) interacts with ATP.

In terms of assembly, homodimer.

The enzyme catalyses XMP + L-glutamine + ATP + H2O = GMP + L-glutamate + AMP + diphosphate + 2 H(+). The protein operates within purine metabolism; GMP biosynthesis; GMP from XMP (L-Gln route): step 1/1. Catalyzes the synthesis of GMP from XMP. The sequence is that of GMP synthase [glutamine-hydrolyzing] from Synechococcus sp. (strain CC9605).